The primary structure comprises 424 residues: QQRYLNAKRYVKLAIVADRSMVTKHNGKLKKLRKWIYRIVNTINEVYRSLNILVALVYLEIWSKEDLINVTSAAKDTLASFGNWRATDLLKRRSHDAAHLLTNIKFDGTTVGKAYVASMCQQDSSVGINQDHSKINLLVALTMAHELGHNLGMSHDVVNTEKQCNCGTCVMAPTISDQISKLFSNCSKNDYENFLTLYKPQCILNEPSKTDIVSPPVCGNELLEVGEECDCGSPETCQNPCCDAATCKLTSGSQCAKGLCCDQCKFSKSGTECRAAKDDCDIAESCTGQSADCPTDDLQRNGKPCQNNAGYCYNGKCPIMLNQCISFYGSNATVAPDICFNYNLKGEGNFYCRKEQATIFPCAQKDKKCGRLFCVLGPTGKRISCKNTYSEDDPNYGMVDLGTKCEDGKVCNSNRECVDVNTAY.

Gln-1 is subject to Pyrrolidone carboxylic acid. The Peptidase M12B domain occupies Arg-9–Pro-207. The N-linked (GlcNAc...) asparagine glycan is linked to Asn-69. Asp-96 contacts Ca(2+). 3 disulfides stabilise this stretch: Cys-120–Cys-202, Cys-164–Cys-186, and Cys-166–Cys-169. His-145 is a binding site for Zn(2+). Glu-146 is an active-site residue. Residues His-149 and His-155 each coordinate Zn(2+). Asn-185 carries N-linked (GlcNAc...) asparagine glycosylation. The Ca(2+) site is built by Cys-202, Asn-205, Val-217, Asn-220, Leu-222, Glu-224, Glu-227, and Asp-230. In terms of domain architecture, Disintegrin spans Pro-215 to Asn-301. Cystine bridges form between Cys-218-Cys-247, Cys-229-Cys-242, Cys-231-Cys-237, Cys-241-Cys-264, Cys-255-Cys-261, Cys-260-Cys-286, Cys-273-Cys-293, Cys-280-Cys-312, Cys-305-Cys-317, Cys-324-Cys-374, Cys-339-Cys-385, Cys-352-Cys-362, Cys-369-Cys-411, and Cys-405-Cys-417. Positions Asp-279–Asp-281 match the D/ECD-tripeptide motif. 3 residues coordinate Ca(2+): Asp-281, Glu-284, and Asp-296. The N-linked (GlcNAc...) asparagine glycan is linked to Asn-331.

It belongs to the venom metalloproteinase (M12B) family. P-III subfamily. P-IIIa sub-subfamily. As to quaternary structure, monomer. It depends on Zn(2+) as a cofactor. Post-translationally, glycosylated. Expressed by the venom gland.

It is found in the secreted. Its activity is regulated as follows. Its proteolytic activity is inhibited by EDTA, TPEN, 1,10-phenanthroline, and some thiol compounds, but is enhanced by alkaline earth metal ions (Mg2+, Ca2+, Sr2+, and Ba2+). Its activity is not modulated by urea (4 M). Its function is as follows. Non-hemorrhagic metalloproteinase that degrades fibrinogen. The alpha chain (FGA) is rapidly degraded, the beta chain (FGB) is degraded very slowly, while the gamma chain is left intact. Shows a prefential cleavage at X-Leu bonds. Cleaves insulin B chain at '29-His-|-Leu-30', '33-Ser-|-His-34', '38-Ala-|-Leu-39' and '40-Tyr-|-Leu-41' bonds. This is Zinc metalloproteinase-disintegrin-like brevilysin H2a from Gloydius brevicauda (Korean slamosa snake).